A 337-amino-acid chain; its full sequence is tRNA N6-adenosine threonylcarbamoyltransferase (337 aa).

Fe cation-binding residues include His-107 and His-111. Residues 129 to 133 (LISGG), Asp-162, Gly-175, and Asn-271 each bind substrate. Asp-299 is a binding site for Fe cation.

It belongs to the KAE1 / TsaD family. The cofactor is Fe(2+).

The protein localises to the cytoplasm. The enzyme catalyses L-threonylcarbamoyladenylate + adenosine(37) in tRNA = N(6)-L-threonylcarbamoyladenosine(37) in tRNA + AMP + H(+). Its function is as follows. Required for the formation of a threonylcarbamoyl group on adenosine at position 37 (t(6)A37) in tRNAs that read codons beginning with adenine. Is involved in the transfer of the threonylcarbamoyl moiety of threonylcarbamoyl-AMP (TC-AMP) to the N6 group of A37, together with TsaE and TsaB. TsaD likely plays a direct catalytic role in this reaction. In Sulfurovum sp. (strain NBC37-1), this protein is tRNA N6-adenosine threonylcarbamoyltransferase.